We begin with the raw amino-acid sequence, 89 residues long: Small ribosomal subunit protein uS15 (89 aa).

Belongs to the universal ribosomal protein uS15 family. In terms of assembly, part of the 30S ribosomal subunit. Forms a bridge to the 50S subunit in the 70S ribosome, contacting the 23S rRNA.

One of the primary rRNA binding proteins, it binds directly to 16S rRNA where it helps nucleate assembly of the platform of the 30S subunit by binding and bridging several RNA helices of the 16S rRNA. Its function is as follows. Forms an intersubunit bridge (bridge B4) with the 23S rRNA of the 50S subunit in the ribosome. In Neisseria gonorrhoeae (strain ATCC 700825 / FA 1090), this protein is Small ribosomal subunit protein uS15.